The primary structure comprises 426 residues: Phosphomethylpyrimidine synthase (426 aa).

Residues Asn-66, Met-95, Tyr-124, His-163, 185–187 (SRG), 226–229 (DGLR), and Glu-265 each bind substrate. His-269 is a Zn(2+) binding site. Tyr-292 lines the substrate pocket. His-333 serves as a coordination point for Zn(2+). [4Fe-4S] cluster is bound by residues Cys-407, Cys-410, and Cys-414.

Belongs to the ThiC family. [4Fe-4S] cluster serves as cofactor.

The enzyme catalyses 5-amino-1-(5-phospho-beta-D-ribosyl)imidazole + S-adenosyl-L-methionine = 4-amino-2-methyl-5-(phosphooxymethyl)pyrimidine + CO + 5'-deoxyadenosine + formate + L-methionine + 3 H(+). Its pathway is cofactor biosynthesis; thiamine diphosphate biosynthesis. Catalyzes the synthesis of the hydroxymethylpyrimidine phosphate (HMP-P) moiety of thiamine from aminoimidazole ribotide (AIR) in a radical S-adenosyl-L-methionine (SAM)-dependent reaction. The protein is Phosphomethylpyrimidine synthase of Thermococcus gammatolerans (strain DSM 15229 / JCM 11827 / EJ3).